Consider the following 256-residue polypeptide: Hypodermin-A (256 aa).

The signal sequence occupies residues 1 to 22 (MLKFVILLCSIAYVFGAVVPLG). Positions 23-30 (MLSQSDGR) are cleaved as a propeptide — activation peptide. The Peptidase S1 domain occupies 31-254 (IVGGVESKIE…VRSLIVSNAE (224 aa)). Cysteine 56 and cysteine 72 are disulfide-bonded. Residues histidine 71 and aspartate 116 each act as charge relay system in the active site. 2 disulfides stabilise this stretch: cysteine 180/cysteine 197 and cysteine 206/cysteine 230. Serine 210 (charge relay system) is an active-site residue.

Belongs to the peptidase S1 family.

It localises to the secreted. In terms of biological role, specificity, limited to carboxyl side of arginine residue in B-chain of insulin. The sequence is that of Hypodermin-A from Hypoderma lineatum (Early cattle grub).